The primary structure comprises 252 residues: 2-succinyl-6-hydroxy-2,4-cyclohexadiene-1-carboxylate synthase (252 aa).

This sequence belongs to the AB hydrolase superfamily. MenH family. Monomer.

It catalyses the reaction 5-enolpyruvoyl-6-hydroxy-2-succinyl-cyclohex-3-ene-1-carboxylate = (1R,6R)-6-hydroxy-2-succinyl-cyclohexa-2,4-diene-1-carboxylate + pyruvate. It functions in the pathway quinol/quinone metabolism; 1,4-dihydroxy-2-naphthoate biosynthesis; 1,4-dihydroxy-2-naphthoate from chorismate: step 3/7. Its pathway is quinol/quinone metabolism; menaquinone biosynthesis. Functionally, catalyzes a proton abstraction reaction that results in 2,5-elimination of pyruvate from 2-succinyl-5-enolpyruvyl-6-hydroxy-3-cyclohexene-1-carboxylate (SEPHCHC) and the formation of 2-succinyl-6-hydroxy-2,4-cyclohexadiene-1-carboxylate (SHCHC). The protein is 2-succinyl-6-hydroxy-2,4-cyclohexadiene-1-carboxylate synthase of Salmonella typhi.